The primary structure comprises 180 residues: uncharacterized protein (180 aa).

Residues 31 to 180 enclose the N-acetyltransferase domain; that stretch reads LLVRTAEWLR…HLFEKEITAE (150 aa).

This sequence belongs to the acetyltransferase family.

This is an uncharacterized protein from Bacillus subtilis (strain 168).